Reading from the N-terminus, the 243-residue chain is UMP-CMP kinase 1 (243 aa).

29–34 lines the ATP pocket; the sequence is GSGKGT. The tract at residues 49-78 is NMP; that stretch reads SAGDLLREEAKYDTEQGTMIKNLMNEGKLV. A ribonucleoside 5'-phosphate contacts are provided by residues Arg55, 76–78, and 103–106; these read KLV and GFPR. Asn110 serves as a coordination point for CMP. Residues 141-149 form an LID region; it reads NRNQGRDDD. Residue Arg142 participates in ATP binding. A ribonucleoside 5'-phosphate contacts are provided by Arg146 and Arg157. Residue Arg185 coordinates ATP.

The protein belongs to the adenylate kinase family. UMP-CMP kinase subfamily. In terms of assembly, monomer. Mg(2+) is required as a cofactor.

The protein localises to the cytoplasm. It is found in the nucleus. It catalyses the reaction UMP + ATP = UDP + ADP. The enzyme catalyses CMP + ATP = CDP + ADP. The catalysed reaction is dCMP + ATP = dCDP + ADP. Catalyzes the phosphorylation of pyrimidine nucleoside monophosphates at the expense of ATP. Plays an important role in de novo pyrimidine nucleotide biosynthesis. Has preference for UMP and CMP as phosphate acceptors. This chain is UMP-CMP kinase 1, found in Oryza sativa subsp. japonica (Rice).